Reading from the N-terminus, the 147-residue chain is Hemoglobin subunit beta (147 aa).

Residues 3–147 (HWTAEEKQLI…VAHALARKYH (145 aa)) enclose the Globin domain. H64 and H93 together coordinate heme b.

Belongs to the globin family. Heterotetramer of two alpha chains and two beta chains. Red blood cells.

In terms of biological role, involved in oxygen transport from the lung to the various peripheral tissues. This is Hemoglobin subunit beta (HBB) from Cairina moschata (Muscovy duck).